The chain runs to 111 residues: Disintegrin DS-AN (111 aa).

An N-terminal signal peptide occupies residues 1–20 (MIQVLLVIICLAVFPYQGSC). The propeptide occupies 21–47 (IILESGNVNDYEIVYPKKLIVLPTGAM). The Disintegrin domain occupies 47–111 (MNSPHPCCDP…PDCPRNPYKD (65 aa)). 4 disulfide bridges follow: cysteine 53/cysteine 76, cysteine 67/cysteine 73, cysteine 72/cysteine 97, and cysteine 85/cysteine 104. The short motif at 89–91 (RGD) is the Cell attachment site element.

In terms of assembly, heterodimer; disulfide-linked.

The protein resides in the secreted. Inhibits ADP-induced platelet aggregation in human platelet-rich plasma (IC(50) is 8 uM). The chain is Disintegrin DS-AN from Atheris nitschei (Great lakes bush viper).